Reading from the N-terminus, the 242-residue chain is DNA repair protein RecO (242 aa).

It belongs to the RecO family. As to quaternary structure, monomer.

Its function is as follows. Involved in DNA repair and RecF pathway recombination. The sequence is that of DNA repair protein RecO from Salmonella gallinarum (strain 287/91 / NCTC 13346).